The chain runs to 371 residues: Tetraacyldisaccharide 4'-kinase (371 aa).

48 to 55 contributes to the ATP binding site; sequence SAGGTGKT.

This sequence belongs to the LpxK family.

The catalysed reaction is a lipid A disaccharide + ATP = a lipid IVA + ADP + H(+). Its pathway is glycolipid biosynthesis; lipid IV(A) biosynthesis; lipid IV(A) from (3R)-3-hydroxytetradecanoyl-[acyl-carrier-protein] and UDP-N-acetyl-alpha-D-glucosamine: step 6/6. Transfers the gamma-phosphate of ATP to the 4'-position of a tetraacyldisaccharide 1-phosphate intermediate (termed DS-1-P) to form tetraacyldisaccharide 1,4'-bis-phosphate (lipid IVA). This Chlorobium chlorochromatii (strain CaD3) protein is Tetraacyldisaccharide 4'-kinase.